Consider the following 808-residue polypeptide: DNA gyrase subunit B (808 aa).

The 116-residue stretch at 429–544 (SELFIVEGDS…KGYLYIAQPP (116 aa)) folds into the Toprim domain. Residues Glu-435, Asp-509, and Asp-511 each contribute to the Mg(2+) site.

The protein belongs to the type II topoisomerase GyrB family. In terms of assembly, heterotetramer, composed of two GyrA and two GyrB chains. In the heterotetramer, GyrA contains the active site tyrosine that forms a transient covalent intermediate with DNA, while GyrB binds cofactors and catalyzes ATP hydrolysis. It depends on Mg(2+) as a cofactor. Mn(2+) is required as a cofactor. Requires Ca(2+) as cofactor.

It localises to the cytoplasm. The enzyme catalyses ATP-dependent breakage, passage and rejoining of double-stranded DNA.. Its function is as follows. A type II topoisomerase that negatively supercoils closed circular double-stranded (ds) DNA in an ATP-dependent manner to modulate DNA topology and maintain chromosomes in an underwound state. Negative supercoiling favors strand separation, and DNA replication, transcription, recombination and repair, all of which involve strand separation. Also able to catalyze the interconversion of other topological isomers of dsDNA rings, including catenanes and knotted rings. Type II topoisomerases break and join 2 DNA strands simultaneously in an ATP-dependent manner. This Rickettsia felis (strain ATCC VR-1525 / URRWXCal2) (Rickettsia azadi) protein is DNA gyrase subunit B.